Reading from the N-terminus, the 330-residue chain is Uroporphyrinogen decarboxylase (330 aa).

Substrate contacts are provided by residues 10-14, Phe29, Ser59, Asp60, Tyr137, Ser192, and His307; that span reads RQAGR.

Belongs to the uroporphyrinogen decarboxylase family. In terms of assembly, homodimer.

The protein localises to the plastid. It is found in the chloroplast. It carries out the reaction uroporphyrinogen III + 4 H(+) = coproporphyrinogen III + 4 CO2. It participates in porphyrin-containing compound metabolism; protoporphyrin-IX biosynthesis; coproporphyrinogen-III from 5-aminolevulinate: step 4/4. Functionally, catalyzes the decarboxylation of four acetate groups of uroporphyrinogen-III to yield coproporphyrinogen-III. In Hordeum vulgare (Barley), this protein is Uroporphyrinogen decarboxylase (DCUP).